We begin with the raw amino-acid sequence, 159 residues long: tRNA-specific adenosine deaminase (159 aa).

Residues 6–133 form the CMP/dCMP-type deaminase domain; it reads EEQTYFMQEA…ERLNHRVQVE (128 aa). Residue His57 coordinates Zn(2+). Catalysis depends on Glu59, which acts as the Proton donor. Cys87 and Cys90 together coordinate Zn(2+).

The protein belongs to the cytidine and deoxycytidylate deaminase family. Homodimer. It depends on Zn(2+) as a cofactor.

It carries out the reaction adenosine(34) in tRNA + H2O + H(+) = inosine(34) in tRNA + NH4(+). Its function is as follows. Catalyzes the deamination of adenosine to inosine at the wobble position 34 of tRNA(Arg2). In Streptococcus pyogenes serotype M18 (strain MGAS8232), this protein is tRNA-specific adenosine deaminase.